The sequence spans 78 residues: Large ribosomal subunit protein bL28 (78 aa).

Belongs to the bacterial ribosomal protein bL28 family.

This is Large ribosomal subunit protein bL28 from Acidithiobacillus ferrooxidans (strain ATCC 23270 / DSM 14882 / CIP 104768 / NCIMB 8455) (Ferrobacillus ferrooxidans (strain ATCC 23270)).